Here is a 113-residue protein sequence, read N- to C-terminus: U11-theraphotoxin-Hhn1a (113 aa).

The signal sequence occupies residues 1-21 (MNTVRVTFLLVFVLAVSLGQA). A propeptide spanning residues 22–74 (DKDENRMEMQEKTEQGRSYLDFAENLLLQKLEELEAKLLEEDSEESRNSRQKR) is cleaved from the precursor. The segment at 61-83 (EEDSEESRNSRQKRCIGEGVPCD) is disordered. Cystine bridges form between C75/C90, C82/C95, and C89/C110.

This sequence belongs to the neurotoxin 14 (magi-1) family. 01 (HNTX-16) subfamily. In terms of tissue distribution, expressed by the venom gland.

It is found in the secreted. Its function is as follows. Probable ion channel inhibitor. In Cyriopagopus hainanus (Chinese bird spider), this protein is U11-theraphotoxin-Hhn1a.